A 264-amino-acid polypeptide reads, in one-letter code: Cell division protein FtsQ (264 aa).

The tract at residues 1–24 (MAGPTTAERGARQQESSGPPRVRR) is disordered. At 1–32 (MAGPTTAERGARQQESSGPPRVRRFRPPRLRT) the chain is on the cytoplasmic side. Residues 33 to 53 (IIILAVALVLVAGGTVWVLYG) traverse the membrane as a helical segment. Over 54–264 (SNWTRLERVS…VATAPASSGS (211 aa)) the chain is Extracellular. The region spanning 57–126 (TRLERVSVSG…HGIGLKVTER (70 aa)) is the POTRA domain.

The protein belongs to the FtsQ/DivIB family. FtsQ subfamily.

The protein localises to the cell membrane. Essential cell division protein. The chain is Cell division protein FtsQ from Streptomyces coelicolor (strain ATCC BAA-471 / A3(2) / M145).